A 248-amino-acid polypeptide reads, in one-letter code: Mannose-binding protein C (248 aa).

A signal peptide spans 1–20 (MSLFPSLTLLLLSVVATSYS). The Collagen-like domain occupies 42–99 (GINGFPGKDGRDGTKGEKGEPGQGLRGLQGPPGKLGPPGNPGSSGSPGPKGQKGDPGE). The disordered stretch occupies residues 43-113 (INGFPGKDGR…DSSLAASERK (71 aa)). Pro-47 is subject to 4-hydroxyproline. Positions 49 to 61 (KDGRDGTKGEKGE) are enriched in basic and acidic residues. 4-hydroxyproline occurs at positions 73, 79, 82, and 88. A compositionally biased stretch (low complexity) spans 82 to 91 (PGSSGSPGPK). Positions 112-130 (RKALQTEMARIKKWLTFSL) form a coiled coil. In terms of domain architecture, C-type lectin spans 134–245 (VGNKFFLTNG…CSSSHLALCE (112 aa)). 2 cysteine pairs are disulfide-bonded: Cys-155-Cys-244 and Cys-222-Cys-236.

In terms of assembly, oligomeric complex of 3 or more homotrimers. Interacts with MASP1 and MASP2. Interacts with MEP1A and MEP1B and may inhibit their catalytic activity. Hydroxylation on proline residues within the sequence motif, GXPG, is most likely to be 4-hydroxy as this fits the requirement for 4-hydroxylation in vertebrates.

The protein resides in the secreted. Functionally, calcium-dependent lectin involved in innate immune defense. Binds mannose, fucose and N-acetylglucosamine on different microorganisms and activates the lectin complement pathway. Binds to late apoptotic cells, as well as to apoptotic blebs and to necrotic cells, but not to early apoptotic cells, facilitating their uptake by macrophages. In Chlorocebus aethiops (Green monkey), this protein is Mannose-binding protein C (MBL2).